The primary structure comprises 125 residues: L-fucose mutarotase (125 aa).

Histidine 13 acts as the Proton donor in catalysis.

The protein belongs to the RbsD / FucU family. FucU mutarotase subfamily.

The catalysed reaction is alpha-L-fucose = beta-L-fucose. Its activity is regulated as follows. Active toward L-galactopyranoside and D-arabinopyranoside but no D-fucopyranoside activity detected. In terms of biological role, plays a role in the catabolism of L-fucose. Involved in the anomeric conversion of L-fucose. The protein is L-fucose mutarotase of Xanthomonas campestris pv. campestris (strain ATCC 33913 / DSM 3586 / NCPPB 528 / LMG 568 / P 25).